The following is a 739-amino-acid chain: Photosystem I P700 chlorophyll a apoprotein A1 (739 aa).

8 helical membrane passes run 61–84 (IFSAHFGHLAVVFVWLSGMYFHGA), 147–170 (LYVTAIGGLVMAALMVFAGWFHYH), 186–210 (MNHHLSVLLGCGSLGWTGHLIHVSL), 281–299 (VAHHHLAIAVLFIIAGHMY), 336–359 (WHAQLAVNLALLGSLTIVIAHHMY), 375–401 (LSLFTHHTWIGGFLIVGAGAHGAIFMV), 423–445 (AIISHLNWVCIFLGFHSFGLYIH), and 520–538 (FMVHHIHAFTIHVTVLILL). Residues cysteine 562 and cysteine 571 each coordinate [4Fe-4S] cluster. The next 2 helical transmembrane spans lie at 578–599 (HVFLGLFWMYNSLSIVIFHFSW) and 653–675 (LSAYGIMFLAGHFVFAFSLMFLF). Residue histidine 664 coordinates chlorophyll a'. Chlorophyll a contacts are provided by methionine 672 and tyrosine 680. Tryptophan 681 lines the phylloquinone pocket. A helical transmembrane segment spans residues 713-733 (AVGVAHYLLGGIVTTWAFFLA).

This sequence belongs to the PsaA/PsaB family. As to quaternary structure, the PsaA/B heterodimer binds the P700 chlorophyll special pair and subsequent electron acceptors. PSI consists of a core antenna complex that captures photons, and an electron transfer chain that converts photonic excitation into a charge separation. The cyanobacterial PSI reaction center is composed of one copy each of PsaA,B,C,D,E,F,I,J,K,L,M and X, and forms trimeric complexes. Requires PSI electron transfer chain: 5 chlorophyll a, 1 chlorophyll a', 2 phylloquinones and 3 4Fe-4S clusters. PSI core antenna: 90 chlorophyll a, 22 carotenoids, 3 phospholipids and 1 galactolipid. P700 is a chlorophyll a/chlorophyll a' dimer, A0 is one or more chlorophyll a, A1 is one or both phylloquinones and FX is a shared 4Fe-4S iron-sulfur center. as cofactor.

The protein localises to the cellular thylakoid membrane. It catalyses the reaction reduced [plastocyanin] + hnu + oxidized [2Fe-2S]-[ferredoxin] = oxidized [plastocyanin] + reduced [2Fe-2S]-[ferredoxin]. Functionally, psaA and PsaB bind P700, the primary electron donor of photosystem I (PSI), as well as the electron acceptors A0, A1 and FX. PSI is a plastocyanin/cytochrome c6-ferredoxin oxidoreductase, converting photonic excitation into a charge separation, which transfers an electron from the donor P700 chlorophyll pair to the spectroscopically characterized acceptors A0, A1, FX, FA and FB in turn. Oxidized P700 is reduced on the lumenal side of the thylakoid membrane by plastocyanin or cytochrome c6. The polypeptide is Photosystem I P700 chlorophyll a apoprotein A1 (Picosynechococcus sp. (strain ATCC 27264 / PCC 7002 / PR-6) (Agmenellum quadruplicatum)).